Reading from the N-terminus, the 152-residue chain is D-erythrulose-4-phosphate isomerase (152 aa).

Catalysis depends on Cys-67, which acts as the Proton acceptor.

It belongs to the LacAB/RpiB family.

The enzyme catalyses D-erythrulose 4-phosphate = D-erythrose 4-phosphate. Its pathway is carbohydrate metabolism. In terms of biological role, involved in catabolism of D-apiose. Catalyzes the isomerization of D-erythrulose 4-phosphate to D-erythrose 4-phosphate. The polypeptide is D-erythrulose-4-phosphate isomerase (Pectobacterium atrosepticum (strain SCRI 1043 / ATCC BAA-672) (Erwinia carotovora subsp. atroseptica)).